Reading from the N-terminus, the 156-residue chain is Cytochrome c-type biogenesis protein CcmE (156 aa).

The Cytoplasmic segment spans residues 1–7 (MTRRQRR). Residues 8 to 28 (LGILLAALVCAGAATALTLNA) form a helical; Signal-anchor for type II membrane protein membrane-spanning segment. Over 29 to 156 (FRSNLVFFFS…AKESARSASR (128 aa)) the chain is Periplasmic. Heme contacts are provided by H123 and Y127.

Belongs to the CcmE/CycJ family.

The protein localises to the cell inner membrane. Its function is as follows. Heme chaperone required for the biogenesis of c-type cytochromes. Transiently binds heme delivered by CcmC and transfers the heme to apo-cytochromes in a process facilitated by CcmF and CcmH. The chain is Cytochrome c-type biogenesis protein CcmE from Ralstonia pickettii (strain 12J).